The primary structure comprises 153 residues: Probable ubiquitin-conjugating enzyme E2 C (153 aa).

Positions 6 to 153 constitute a UBC core domain; it reads SVSKRLQSEL…KRYQEATSRP (148 aa). C90 serves as the catalytic Glycyl thioester intermediate.

This sequence belongs to the ubiquitin-conjugating enzyme family. In terms of assembly, component of the APC/C complex. Post-translationally, autoubiquitinated by the APC/C complex, leading to its degradation by the proteasome.

The catalysed reaction is S-ubiquitinyl-[E1 ubiquitin-activating enzyme]-L-cysteine + [E2 ubiquitin-conjugating enzyme]-L-cysteine = [E1 ubiquitin-activating enzyme]-L-cysteine + S-ubiquitinyl-[E2 ubiquitin-conjugating enzyme]-L-cysteine.. It functions in the pathway protein modification; protein ubiquitination. Its function is as follows. Catalyzes the covalent attachment of ubiquitin to other proteins. Acts as an essential factor of the anaphase promoting complex/cyclosome (APC/C), a cell cycle-regulated ubiquitin ligase that controls progression through mitosis. Acts by initiating polyubiquitin chains on APC/C substrates, leading to the degradation of APC/C substrates by the proteasome and promoting mitotic exit. This is Probable ubiquitin-conjugating enzyme E2 C (ube2c) from Dictyostelium discoideum (Social amoeba).